Reading from the N-terminus, the 349-residue chain is Ion-translocating oxidoreductase complex subunit D (349 aa).

Transmembrane regions (helical) follow at residues Ile-20–Gly-40, Gly-42–Leu-62, Val-83–Ala-105, and Ile-120–Thr-140. FMN phosphoryl threonine is present on Thr-184. A run of 5 helical transmembrane segments spans residues Ile-212–Leu-232, Val-236–Thr-256, Phe-263–Ile-283, Ser-291–Ile-311, and Asp-319–Leu-339.

The protein belongs to the NqrB/RnfD family. The complex is composed of six subunits: RnfA, RnfB, RnfC, RnfD, RnfE and RnfG. The cofactor is FMN.

The protein resides in the cell inner membrane. In terms of biological role, part of a membrane-bound complex that couples electron transfer with translocation of ions across the membrane. The protein is Ion-translocating oxidoreductase complex subunit D of Buchnera aphidicola subsp. Schizaphis graminum (strain Sg).